Consider the following 144-residue polypeptide: Small ribosomal subunit protein bS6 (144 aa).

The segment at lysine 92–arginine 144 is disordered. The segment covering valine 93–arginine 144 has biased composition (basic and acidic residues).

This sequence belongs to the bacterial ribosomal protein bS6 family.

In terms of biological role, binds together with bS18 to 16S ribosomal RNA. This chain is Small ribosomal subunit protein bS6 (rpsF), found in Rhodobacter capsulatus (strain ATCC BAA-309 / NBRC 16581 / SB1003).